A 532-amino-acid chain; its full sequence is Protein tweety homolog 2 (532 aa).

Residues 1 to 44 (MPAARVEYIAPWWVVWLHSVPHLGLRLQRVDSTFSPGDETYQES) lie on the Extracellular side of the membrane. Residues 45 to 65 (LLFLGVLAAIGLGLNLIFLTV) traverse the membrane as a helical segment. Topologically, residues 66–87 (YLVCTCCCRRDHTVQTKQQESC) are cytoplasmic. The helical transmembrane segment at 88 to 108 (CVTWTAVVAGLLCCAAVGVGF) threads the bilayer. At 109–213 (YGNSETNDGM…QTAYVEYYRW (105 aa)) the chain is on the extracellular side. Positions 113 and 116 each coordinate Ca(2+). Asn-129 is a glycosylation site (N-linked (GlcNAc...) asparagine). Positions 164–166 (RGD) match the RGD motif. Thr-199 carries the phosphothreonine modification. Residues 214-234 (LSYLLLFILDLVICLVTCLGL) form a helical membrane-spanning segment. At 235–240 (ARRSKC) the chain is on the cytoplasmic side. The chain crosses the membrane as a helical span at residues 241-261 (LLASMLCCGILTLILSWASLA). Over 262–385 (ADAAAAVGTS…DALTGICYDG (124 aa)) the chain is Extracellular. 2 disulfide bridges follow: Cys-274–Cys-382 and Cys-300–Cys-367. 2 N-linked (GlcNAc...) asparagine glycosylation sites follow: Asn-283 and Asn-352. The helical transmembrane segment at 386 to 406 (IEGLLFLGLFSLLAALAFSTL) threads the bilayer. Residues 407-532 (TCAGPRAWKY…EHLRHYEFPS (126 aa)) are Cytoplasmic-facing. Ser-504 bears the Phosphoserine mark. The PY-motif; mediates interaction with NEDD4L motif lies at 506–509 (PPTY).

It belongs to the tweety family. In terms of assembly, forms cis-homodimers in the presence of Ca(+2) and forms monomers and trans-dimers in the absence of Ca(2+). Interacts with NEDD4L. Ubiquitinated by NEDD4L, leading to its proteasomal degradation.

The protein localises to the cell membrane. It carries out the reaction chloride(in) = chloride(out). It catalyses the reaction L-glutamate(out) = L-glutamate(in). With respect to regulation, inhibited by (4-[(2-butyl-6,7-dichloro-2- cyclopentyl-2,3-dihydro-1-oxo-1H-inden-5-yl)oxy]butanoic acid). Its function is as follows. Calcium-independent, swelling-dependent volume-regulated anion channel (VRAC-swell) which plays a pivotal role in the process of regulatory volume decrease (RVD) in the brain through the efflux of anions like chloride and organic osmolytes like glutamate. Probable large-conductance Ca(2+)-activated chloride channel. This chain is Protein tweety homolog 2 (Ttyh2), found in Mus musculus (Mouse).